Consider the following 126-residue polypeptide: MNRRRPSAPAPHLETGNRGERRALEHLTGQGLELLECNFRCRAGEIDLIMRDGEVVVFVEVRVRTHPGYGGALASITPAKQRRLARAAARWLQRHRLTQRAVCRFDVVTFDGERPQWLRHAFTAPG.

This sequence belongs to the UPF0102 family.

In Alkalilimnicola ehrlichii (strain ATCC BAA-1101 / DSM 17681 / MLHE-1), this protein is UPF0102 protein Mlg_2205.